A 627-amino-acid polypeptide reads, in one-letter code: Pentatricopeptide repeat-containing protein At2g35030, mitochondrial (627 aa).

Residues 1 to 44 (MQSRALSRLRSYYKRSSVFPSSDNDRSVQLFNLVRSIYSSSSRP) constitute a mitochondrion transit peptide. PPR repeat units follow at residues 45–75 (RVPQ…LPER), 76–110 (DVVT…KNVV), 111–138 (TWTA…MPER), 139–173 (NVVS…NIVS), 174–200 (WNSM…MPRR), 201–235 (DVVS…NIIS), 236–262 (WNAM…MPER), 263–293 (DFAS…MPEK), 294–328 (NVIS…GSVK), 330–360 (NVGT…ISKS), 365–396 (NEIV…LVCQ), 398–432 (DLIS…GFKP), 433–467 (SAVT…ESLP), and 469–499 (REEH…DDAR). The segment at 504–579 (FYGAILSACN…QPGCSWVKVG (76 aa)) is type E motif. Residues 580 to 610 (KQNHLFVVGDKSHPQFEALDSILSDLRNKMR) form a type E(+) motif region.

This sequence belongs to the PPR family. PCMP-E subfamily.

It is found in the mitochondrion. This chain is Pentatricopeptide repeat-containing protein At2g35030, mitochondrial (PCMP-E15), found in Arabidopsis thaliana (Mouse-ear cress).